A 633-amino-acid chain; its full sequence is Phospholipid--sterol O-acyltransferase (633 aa).

Residues 1–6 lie on the Cytoplasmic side of the membrane; that stretch reads MGANSK. Residues 7 to 29 form a helical; Signal-anchor for type II membrane protein membrane-spanning segment; it reads SVTASFTVIAVFFLICGGRTAVE. Residues 30–633 are Lumenal-facing; that stretch reads DETEFHGDYS…TSANMLLQYI (604 aa). Catalysis depends on Ser-195, which acts as the Acyl-ester intermediate. Active-site charge relay system residues include Asp-461 and His-505.

It belongs to the AB hydrolase superfamily. Lipase family.

Its subcellular location is the microsome membrane. Functionally, involved in lipid catabolism. Essential for sterol esters biosynthesis in leaves and seeds, but not in flowers. Plays a role in controlling the free sterol content of leaves. Catalyzes the transacylation of acyl groups from phospholipids to a variety of different sterols. Prefers phosphatidylethanolamine over phosphatidylcholine as an acyl donor. Not active toward neutral lipids. Highly specific for position sn-2, which in plant lipids is essentially devoid of saturated acyl groups. Broad sterol specificity (cholesterol &gt; campesterol &gt; sitosterol &gt; stigmasterol), but no activity with lupeol or beta-amyrin. The sequence is that of Phospholipid--sterol O-acyltransferase (PSAT) from Arabidopsis thaliana (Mouse-ear cress).